The chain runs to 1119 residues: DNA-directed RNA polymerase subunit beta (1119 aa).

Belongs to the RNA polymerase beta chain family. In terms of assembly, the RNAP catalytic core consists of 2 alpha, 1 beta, 1 beta' and 1 omega subunit. When a sigma factor is associated with the core the holoenzyme is formed, which can initiate transcription.

It catalyses the reaction RNA(n) + a ribonucleoside 5'-triphosphate = RNA(n+1) + diphosphate. Its function is as follows. DNA-dependent RNA polymerase catalyzes the transcription of DNA into RNA using the four ribonucleoside triphosphates as substrates. In Thermus aquaticus, this protein is DNA-directed RNA polymerase subunit beta.